Reading from the N-terminus, the 225-residue chain is Rho GDP-dissociation inhibitor 3 (225 aa).

The protein belongs to the Rho GDI family.

The protein localises to the cytoplasm. Functionally, inhibits GDP/GTP exchange reaction of RhoB. Interacts specifically with the GDP- and GTP-bound forms of post-translationally processed Rhob and Rhog proteins, both of which show a growth-regulated expression in mammalian cells. Stimulates the release of the GDP-bound but not the GTP-bound RhoB protein. Also inhibits the GDP/GTP exchange of RhoB but shows less ability to inhibit the dissociation of prebound GTP. This chain is Rho GDP-dissociation inhibitor 3 (ARHGDIG), found in Bos taurus (Bovine).